The primary structure comprises 428 residues: Cholesterol 7-desaturase (428 aa).

Residues 6 to 26 (IWGFLTAHPISVVTTILIVYL) form a helical membrane-spanning segment. The region spanning 81–187 (WYCVCESEKL…CIERNNNIYL (107 aa)) is the Rieske domain. [2Fe-2S] cluster contacts are provided by C122, H124, C143, and H146.

It belongs to the cholesterol 7-desaturase family. The cofactor is [2Fe-2S] cluster. Expressed in intestine at all postembryonic stages, including dauer. Expression is reduced in daf-2 mutants.

It is found in the membrane. It catalyses the reaction cholesterol + NADPH + O2 + H(+) = 7-dehydrocholesterol + NADP(+) + 2 H2O. It carries out the reaction cholesterol + NADH + O2 + H(+) = 7-dehydrocholesterol + NAD(+) + 2 H2O. It participates in steroid hormone biosynthesis; dafachronic acid biosynthesis. Functionally, catalyzes the production of 7-dehydrocholesterol (7-DHC or cholesta-5,7-dien-3beta-ol) by inserting a double bond (desaturating) at the C7-C8 single bond of cholesterol. This reaction is the first step in the synthesis of the steroid hormone Delta(7)-dafachronic acid (one of the principal steroid hormones in nematodes). Dafachronic acids bind directly to the nuclear hormone receptor (NHR) daf-12, suppressing dauer formation and inducing reproductive growth. The chain is Cholesterol 7-desaturase (daf-36) from Caenorhabditis elegans.